A 281-amino-acid polypeptide reads, in one-letter code: Digeranylgeranylglyceryl phosphate synthase (281 aa).

The next 7 helical transmembrane spans lie at 14–34, 38–58, 95–115, 149–169, 207–227, 235–255, and 259–279; these read AMAA…LSSA, VSLS…VTGA, LFLF…CGII, FLFG…VLFL, ASYI…VPYL, YLFV…QILG, and AARS…SFIV.

Belongs to the UbiA prenyltransferase family. DGGGP synthase subfamily. The cofactor is Mg(2+).

The protein localises to the cell membrane. The enzyme catalyses sn-3-O-(geranylgeranyl)glycerol 1-phosphate + (2E,6E,10E)-geranylgeranyl diphosphate = 2,3-bis-O-(geranylgeranyl)-sn-glycerol 1-phosphate + diphosphate. Its pathway is membrane lipid metabolism; glycerophospholipid metabolism. Prenyltransferase that catalyzes the transfer of the geranylgeranyl moiety of geranylgeranyl diphosphate (GGPP) to the C2 hydroxyl of (S)-3-O-geranylgeranylglyceryl phosphate (GGGP). This reaction is the second ether-bond-formation step in the biosynthesis of archaeal membrane lipids. The polypeptide is Digeranylgeranylglyceryl phosphate synthase (Methanococcoides burtonii (strain DSM 6242 / NBRC 107633 / OCM 468 / ACE-M)).